Here is a 45-residue protein sequence, read N- to C-terminus: Protein PsbN (45 aa).

Residues Phe-12–Gly-30 form a helical membrane-spanning segment.

Belongs to the PsbN family.

Its subcellular location is the plastid. It localises to the chloroplast thylakoid membrane. Its function is as follows. May play a role in photosystem I and II biogenesis. The protein is Protein PsbN of Adiantum capillus-veneris (Maidenhair fern).